The primary structure comprises 144 residues: Large ribosomal subunit protein uL16 (144 aa).

Residues 1–16 (MLVPKRVKHRKVQRGH) are compositionally biased toward basic residues. Residues 1-20 (MLVPKRVKHRKVQRGHMRGE) form a disordered region.

This sequence belongs to the universal ribosomal protein uL16 family. In terms of assembly, part of the 50S ribosomal subunit.

In terms of biological role, binds 23S rRNA and is also seen to make contacts with the A and possibly P site tRNAs. In Limosilactobacillus reuteri (strain DSM 20016) (Lactobacillus reuteri), this protein is Large ribosomal subunit protein uL16.